The primary structure comprises 81 residues: Sulfur carrier protein TusA (81 aa).

Cysteine 19 functions as the Cysteine persulfide intermediate in the catalytic mechanism.

The protein belongs to the sulfur carrier protein TusA family.

It is found in the cytoplasm. Its function is as follows. Sulfur carrier protein which probably makes part of a sulfur-relay system. The polypeptide is Sulfur carrier protein TusA (Vibrio vulnificus (strain CMCP6)).